Here is a 236-residue protein sequence, read N- to C-terminus: Ribose-5-phosphate isomerase A (236 aa).

Substrate-binding positions include 28–31 (TGST), 83–86 (DGAD), and 96–99 (KGGG). E105 (proton acceptor) is an active-site residue. Position 123 (K123) interacts with substrate.

It belongs to the ribose 5-phosphate isomerase family. As to quaternary structure, homodimer.

It catalyses the reaction aldehydo-D-ribose 5-phosphate = D-ribulose 5-phosphate. It participates in carbohydrate degradation; pentose phosphate pathway; D-ribose 5-phosphate from D-ribulose 5-phosphate (non-oxidative stage): step 1/1. Its function is as follows. Catalyzes the reversible conversion of ribose-5-phosphate to ribulose 5-phosphate. This Methylorubrum populi (strain ATCC BAA-705 / NCIMB 13946 / BJ001) (Methylobacterium populi) protein is Ribose-5-phosphate isomerase A.